A 367-amino-acid chain; its full sequence is Alanine racemase (367 aa).

The Proton acceptor; specific for D-alanine role is filled by K34. Residue K34 is modified to N6-(pyridoxal phosphate)lysine. Residue R129 participates in substrate binding. Y251 acts as the Proton acceptor; specific for L-alanine in catalysis. M299 contacts substrate.

It belongs to the alanine racemase family. Requires pyridoxal 5'-phosphate as cofactor.

The catalysed reaction is L-alanine = D-alanine. Its pathway is amino-acid biosynthesis; D-alanine biosynthesis; D-alanine from L-alanine: step 1/1. Functionally, catalyzes the interconversion of L-alanine and D-alanine. May also act on other amino acids. This is Alanine racemase (alr) from Thiobacillus denitrificans (strain ATCC 25259 / T1).